We begin with the raw amino-acid sequence, 83 residues long: Antitoxin ParD1 (83 aa).

Positions 33–60 form a coiled coil; that stretch reads IRSALRLLEDRETQLRALREALEAGERS. Positions 54–83 are disordered; that stretch reads LEAGERSGSSTPFDFDGFLGRKRADASRGR.

Belongs to the ParD antitoxin family.

In terms of biological role, antitoxin component of a type II toxin-antitoxin (TA) system. This is Antitoxin ParD1 (parD1) from Mycobacterium tuberculosis (strain CDC 1551 / Oshkosh).